The primary structure comprises 191 residues: 3-isopropylmalate dehydratase small subunit (191 aa).

It belongs to the LeuD family. LeuD type 1 subfamily. As to quaternary structure, heterodimer of LeuC and LeuD.

The catalysed reaction is (2R,3S)-3-isopropylmalate = (2S)-2-isopropylmalate. Its pathway is amino-acid biosynthesis; L-leucine biosynthesis; L-leucine from 3-methyl-2-oxobutanoate: step 2/4. Its function is as follows. Catalyzes the isomerization between 2-isopropylmalate and 3-isopropylmalate, via the formation of 2-isopropylmaleate. In Solibacter usitatus (strain Ellin6076), this protein is 3-isopropylmalate dehydratase small subunit.